A 273-amino-acid polypeptide reads, in one-letter code: Large ribosomal subunit protein uL2 (273 aa).

The tract at residues 221 to 263 (RGTAMNPVDHPHGGGEGRNFGKHPVTPWGVQTKGKKTRHNKRT) is disordered. Basic residues predominate over residues 253–263 (KGKKTRHNKRT).

Belongs to the universal ribosomal protein uL2 family. In terms of assembly, part of the 50S ribosomal subunit. Forms a bridge to the 30S subunit in the 70S ribosome.

One of the primary rRNA binding proteins. Required for association of the 30S and 50S subunits to form the 70S ribosome, for tRNA binding and peptide bond formation. It has been suggested to have peptidyltransferase activity; this is somewhat controversial. Makes several contacts with the 16S rRNA in the 70S ribosome. The polypeptide is Large ribosomal subunit protein uL2 (Actinobacillus succinogenes (strain ATCC 55618 / DSM 22257 / CCUG 43843 / 130Z)).